The sequence spans 354 residues: Probable L-ascorbate-6-phosphate lactonase UlaG (354 aa).

It belongs to the UlaG family. A divalent metal cation is required as a cofactor.

It localises to the cytoplasm. It carries out the reaction L-ascorbate 6-phosphate + H2O = 3-dehydro-L-gulonate 6-phosphate. The protein operates within cofactor degradation; L-ascorbate degradation; D-xylulose 5-phosphate from L-ascorbate: step 1/4. In terms of biological role, probably catalyzes the hydrolysis of L-ascorbate-6-P into 3-keto-L-gulonate-6-P. Is essential for L-ascorbate utilization under anaerobic conditions. The polypeptide is Probable L-ascorbate-6-phosphate lactonase UlaG (Salmonella heidelberg (strain SL476)).